We begin with the raw amino-acid sequence, 536 residues long: MLSRSSFTSLAVGVFAVYVAHTCWVMYGIVYTRPCPSGGAAACVWPYLARRPKLQLSVYTTTRSNIGAESNIDLVLNVEDFDIESKFERTVNVSVPKKTRNNGTLYAYIFLHHAGVLPWHDGKQVHIVSPLTTYMVPKPEEINLLTGESTTQQIEAEKQTSALDEPVSHWRSRLTLNVMVEDFVFDGSSLPADVHRYMKMVQLGKTVHYLPILFIDQLSNRVKDLMVINRSTTELPLTVSYDKISLGKLRFWIHMQDAVYSLQQFGFSEKDADEVKGIFVDTNLYFLALTFFVAAFHLLFDFLAFKNDISFWKKKRSMIGMSTKAVLWRCFSTVVIFLFLLDEQTSLLVLIPAGIGAVIELWKVKKALKMTVKWQGIRPKVQFGASNDSEKKTEEYDTQAMKYLSYLLYPLCIGGAAYSLLNVKYKSWYSWLINSFVNGVYAFGFLFMLPQLFVNYKMKSVAHLPWKAFTYKAFNTFIDDIFAFIITMPTSHRLACFRDDVVFLVYLYQRWLYPVDKSRVNEYGESYEEKPKKKSS.

The Cytoplasmic segment spans residues 1–9 (MLSRSSFTS). A helical transmembrane segment spans residues 10–30 (LAVGVFAVYVAHTCWVMYGIV). Residues 31 to 284 (YTRPCPSGGA…VKGIFVDTNL (254 aa)) are Extracellular-facing. N-linked (GlcNAc...) asparagine glycosylation is found at asparagine 92, asparagine 102, and asparagine 229. A helical membrane pass occupies residues 285-305 (YFLALTFFVAAFHLLFDFLAF). Residues 306–324 (KNDISFWKKKRSMIGMSTK) lie on the Cytoplasmic side of the membrane. Residues 325 to 342 (AVLWRCFSTVVIFLFLLD) traverse the membrane as a helical segment. The Extracellular portion of the chain corresponds to 343–346 (EQTS). Residues 347–364 (LLVLIPAGIGAVIELWKV) form a helical membrane-spanning segment. Residues 365–402 (KKALKMTVKWQGIRPKVQFGASNDSEKKTEEYDTQAMK) are Cytoplasmic-facing. A helical membrane pass occupies residues 403–423 (YLSYLLYPLCIGGAAYSLLNV). Over 424 to 428 (KYKSW) the chain is Extracellular. The chain crosses the membrane as a helical span at residues 429-449 (YSWLINSFVNGVYAFGFLFML). At 450–536 (PQLFVNYKMK…YEEKPKKKSS (87 aa)) the chain is on the cytoplasmic side.

Belongs to the CLPTM1 family.

The protein localises to the endoplasmic reticulum membrane. It catalyses the reaction a 6-(alpha-D-glucosaminyl)-1-(1,2-diacyl-sn-glycero-3-phospho)-1D-myo-inositol(in) = a 6-(alpha-D-glucosaminyl)-1-(1,2-diacyl-sn-glycero-3-phospho)-1D-myo-inositol(out). The catalysed reaction is 6-(alpha-D-glucosaminyl)-(1-octadecanoyl,2-(9Z)-octadecenoyl-sn-glycero-3-phospho)-1D-myo-inositol(in) = 6-(alpha-D-glucosaminyl)-(1-octadecanoyl,2-(9Z)-octadecenoyl-sn-glycero-3-phospho)-1D-myo-inositol(out). It carries out the reaction a 1,2-diacyl-sn-glycero-3-phospho-(1D-myo-inositol)(in) = a 1,2-diacyl-sn-glycero-3-phospho-(1D-myo-inositol)(out). The enzyme catalyses a 1,2-diacyl-sn-glycero-3-phosphocholine(in) = a 1,2-diacyl-sn-glycero-3-phosphocholine(out). It catalyses the reaction a 1,2-diacyl-sn-glycero-3-phosphoethanolamine(in) = a 1,2-diacyl-sn-glycero-3-phosphoethanolamine(out). In terms of biological role, scramblase that mediates the translocation of glucosaminylphosphatidylinositol (alpha-D-GlcN-(1-6)-(1,2-diacyl-sn-glycero-3-phospho)-1D-myo-inositol, GlcN-PI) across the endoplasmic reticulum (ER) membrane, from the cytosolic leaflet to the luminal leaflet of the ER membrane, where it participates in the biosynthesis of glycosylphosphatidylinositol (GPI). GPI is a lipid glycoconjugate involved in post-translational modification of proteins. Can also translocate 1,2-diacyl-sn-glycero-3-phospho-(1D-myo-inositol) (phosphatidylinositol or PI), as well as several other phospholipids (1,2-diacyl-sn-glycero-3-phosphocholine, 1,2-diacyl-sn-glycero-3-phosphoethanolamine), and N-acetylglucosaminylphosphatidylinositol (GlcNAc-PI) in vitro. The sequence is that of Lipid scramblase CLPTM1L (CLPTM1L) from Gallus gallus (Chicken).